The primary structure comprises 486 residues: tRNA (uracil-5-)-methyltransferase homolog B (486 aa).

S-adenosyl-L-methionine contacts are provided by glutamine 305, glutamate 355, and asparagine 405. Cysteine 433 acts as the Nucleophile in catalysis. Glutamate 479 functions as the Proton acceptor in the catalytic mechanism.

This sequence belongs to the class I-like SAM-binding methyltransferase superfamily. RNA M5U methyltransferase family.

It is found in the mitochondrion matrix. The catalysed reaction is uridine(54) in tRNA + S-adenosyl-L-methionine = 5-methyluridine(54) in tRNA + S-adenosyl-L-homocysteine + H(+). The enzyme catalyses a uridine in 12S rRNA + S-adenosyl-L-methionine = a 5-methyluridine in 12S rRNA + S-adenosyl-L-homocysteine + H(+). In terms of biological role, mitochondrial S-adenosyl-L-methionine-dependent methyltransferase that catalyzes the formation of 5-methyl-uridine in tRNAs and 12S rRNA. Catalyzes the methylation of uridine at position 54 (m5U54) in all tRNAs. Specifically methylates the uridine in position 429 of 12S rRNA (m5U429). Does not affect RNA stability or mitochondrial translation. In Pongo abelii (Sumatran orangutan), this protein is tRNA (uracil-5-)-methyltransferase homolog B (TRMT2B).